The chain runs to 484 residues: Keratin, type I cytoskeletal 14 (484 aa).

Residues 1–20 (MATCSRQFTSSSSMKGSCGI) are disordered. The interval 1 to 120 (MATCSRQFTS…GIGDGLLVGS (120 aa)) is head. Positions 121–156 (EKVTMQNLNDRLATYLDKVRALEEANTELEVKIRDW) are coil 1A. In terms of domain architecture, IF rod spans 121 to 432 (EKVTMQNLND…RLLEGEDAHL (312 aa)). The interval 157-174 (YQRQRPTEIKDYSPYFKT) is linker 1. The coil 1B stretch occupies residues 175-266 (IEDLKSKILA…KNHEEEMASM (92 aa)). The interval 267-289 (RGQVGGDVNVEMDAAPGVDLSRI) is linker 12. Residues 290 to 428 (LNEMRDQYEK…ATYRRLLEGE (139 aa)) form a coil 2 region. Residues 429–484 (DAHLSSSQFSSSSQFSSGSQSSRDVTSTNRQIRTKVMDVHDGKVVSTHEQVLRTKN) are tail. The interval 431–484 (HLSSSQFSSSSQFSSGSQSSRDVTSTNRQIRTKVMDVHDGKVVSTHEQVLRTKN) is interaction with Type I keratins and keratin filaments. The span at 435 to 450 (SQFSSSSQFSSGSQSS) shows a compositional bias: low complexity. The segment at 435-457 (SQFSSSSQFSSGSQSSRDVTSTN) is disordered. Phosphoserine is present on S447.

This sequence belongs to the intermediate filament family. In terms of assembly, heterotetramer of two type I and two type II keratins. Forms a disulfide-linked heterodimer (via 2B domains) with KRT5 (via 2B domains). Forms a heterodimer with KRT1; the interaction is more abundant in the absence of KRT5. Interacts with PLEC isoform 1C, when in a heterodimer with KRT5. Interacts with TRADD and with keratin filaments. Associates with other type I keratins. Interacts with EPPK1. Interacts with KLHL24. Interacts with PKP1 (via N-terminus) and PKP2. In terms of processing, a disulfide bond is formed between rather than within filaments and promotes the formation of a keratin filament cage around the nucleus. Ubiquitinated by the BCR(KLHL24) E3 ubiquitin ligase complex. As to expression, expressed in the corneal epithelium (at protein level). Expressed in the basal layer of the epidermis and the outer root sheath of hair follicles (at protein level). Expressed in the epithelial basal layer in the tail epidermis. Expressed in the parabasal cell row, basal cell layer, and suprabasal epithelial layer of the tongue.

It localises to the cytoplasm. The protein resides in the nucleus. Its function is as follows. The nonhelical tail domain is involved in promoting KRT5-KRT14 filaments to self-organize into large bundles and enhances the mechanical properties involved in resilience of keratin intermediate filaments in vitro. In Mus musculus (Mouse), this protein is Keratin, type I cytoskeletal 14 (Krt14).